Reading from the N-terminus, the 310-residue chain is tRNA uridine(34) hydroxylase (310 aa).

The Rhodanese domain occupies 124-218; it reads SDPEVLLIDT…YFEEVPQEES (95 aa). The active-site Cysteine persulfide intermediate is cysteine 178.

It belongs to the TrhO family.

It catalyses the reaction uridine(34) in tRNA + AH2 + O2 = 5-hydroxyuridine(34) in tRNA + A + H2O. In terms of biological role, catalyzes oxygen-dependent 5-hydroxyuridine (ho5U) modification at position 34 in tRNAs. This is tRNA uridine(34) hydroxylase from Pseudomonas putida (strain W619).